The primary structure comprises 599 residues: Aspartate--tRNA ligase (599 aa).

An L-aspartate-binding site is contributed by Glu-180. Residues 204 to 207 are aspartate; that stretch reads QIFK. Arg-226 is an L-aspartate binding site. Residues 226–228 and Gln-235 contribute to the ATP site; that span reads RDE. L-aspartate is bound at residue His-454. Position 488 (Glu-488) interacts with ATP. Arg-495 contacts L-aspartate. 540–543 contacts ATP; sequence GLDR.

Belongs to the class-II aminoacyl-tRNA synthetase family. Type 1 subfamily. Homodimer.

Its subcellular location is the cytoplasm. It carries out the reaction tRNA(Asp) + L-aspartate + ATP = L-aspartyl-tRNA(Asp) + AMP + diphosphate. Functionally, catalyzes the attachment of L-aspartate to tRNA(Asp) in a two-step reaction: L-aspartate is first activated by ATP to form Asp-AMP and then transferred to the acceptor end of tRNA(Asp). This Clostridium botulinum (strain Alaska E43 / Type E3) protein is Aspartate--tRNA ligase.